The chain runs to 281 residues: Nucleotide-binding protein PSHAa2554 (281 aa).

8–15 (GRSGSGKS) contacts ATP. Residue 56 to 59 (DVRN) participates in GTP binding.

Belongs to the RapZ-like family.

In terms of biological role, displays ATPase and GTPase activities. This is Nucleotide-binding protein PSHAa2554 from Pseudoalteromonas translucida (strain TAC 125).